A 100-amino-acid polypeptide reads, in one-letter code: Aspartyl/glutamyl-tRNA(Asn/Gln) amidotransferase subunit C (100 aa).

Belongs to the GatC family. Heterotrimer of A, B and C subunits.

It carries out the reaction L-glutamyl-tRNA(Gln) + L-glutamine + ATP + H2O = L-glutaminyl-tRNA(Gln) + L-glutamate + ADP + phosphate + H(+). The enzyme catalyses L-aspartyl-tRNA(Asn) + L-glutamine + ATP + H2O = L-asparaginyl-tRNA(Asn) + L-glutamate + ADP + phosphate + 2 H(+). Functionally, allows the formation of correctly charged Asn-tRNA(Asn) or Gln-tRNA(Gln) through the transamidation of misacylated Asp-tRNA(Asn) or Glu-tRNA(Gln) in organisms which lack either or both of asparaginyl-tRNA or glutaminyl-tRNA synthetases. The reaction takes place in the presence of glutamine and ATP through an activated phospho-Asp-tRNA(Asn) or phospho-Glu-tRNA(Gln). This Dictyoglomus turgidum (strain DSM 6724 / Z-1310) protein is Aspartyl/glutamyl-tRNA(Asn/Gln) amidotransferase subunit C.